Reading from the N-terminus, the 223-residue chain is Cell division protein SepF (223 aa).

Positions 19 to 81 are disordered; it reads YDDEYYDDRG…YPPPGGYRGG (63 aa). Positions 36–69 are enriched in basic and acidic residues; the sequence is PRFEDDYGRYEGRDFEDPRRDPRAGMRADLRGEP.

It belongs to the SepF family. As to quaternary structure, homodimer. Interacts with FtsZ.

It localises to the cytoplasm. Its function is as follows. Cell division protein that is part of the divisome complex and is recruited early to the Z-ring. Probably stimulates Z-ring formation, perhaps through the cross-linking of FtsZ protofilaments. Its function overlaps with FtsA. The protein is Cell division protein SepF of Mycobacterium ulcerans (strain Agy99).